Consider the following 376-residue polypeptide: MEEFNSSGSVVNGTGSTEVPQSNAEVIRGQIFEVGPRYIKLAYIGEGAYGMVVSADDTLTNQRVAIKKISPFEHQTYCQRTLREITILTRFKHENIIDIRDILRVDSIDQMRDVYIVQCLMETDLYKLLKTQRLSNDHICYFLYQILRGLKYIHSANVLHRDLKPSNLLLNKTCDLKICDFGLARIADPEHDHTGFLTEYVATRWYRAPEIMLNSKGYTKSIDIWSVGCILAEMLSNRPIFPGKHYLDQLNHILGVLGSPSRDDLECIINEKARNYLESLPFKPNVPWAKLFPNADALALDLLGKMLTFNPHKRIPVEEALAHPYLEQYYDPGDEPVAEVPFRINMENDDISRDALKSLIFEETLKFKERQPDNAP.

The region spanning 38-326 (YIKLAYIGEG…VEEALAHPYL (289 aa)) is the Protein kinase domain. Residues 44 to 52 (IGEGAYGMV) and Lys67 contribute to the ATP site. Asp162 acts as the Proton acceptor in catalysis. Residue Thr198 is modified to Phosphothreonine. The TXY signature appears at 198–200 (TEY). Residue Tyr200 is modified to Phosphotyrosine.

This sequence belongs to the protein kinase superfamily. CMGC Ser/Thr protein kinase family. MAP kinase subfamily. Mg(2+) is required as a cofactor. Dually phosphorylated on Thr-198 and Tyr-200, which activates the enzyme. Phosphorylated on tyrosine residue(s) in response to insulin. As to expression, in third instar larvae, expressed in eye imaginal disks. In adults, expressed in head and body.

It localises to the cytoplasm. It is found in the nucleus. The catalysed reaction is L-seryl-[protein] + ATP = O-phospho-L-seryl-[protein] + ADP + H(+). The enzyme catalyses L-threonyl-[protein] + ATP = O-phospho-L-threonyl-[protein] + ADP + H(+). Activated by tyrosine and threonine phosphorylation. Functionally, serine/threonine kinase which acts as an essential component of the MAP kinase signal transduction pathway to regulate proliferation, differentiation and effect cell fate decisions in various tissues. Required downstream of phl/Raf in the sev/sevenless, tor/torso, and EGF receptor homolog Egfr signal transduction pathways. Required for embryonic epithelial tissue repair. During larval development, mediates Ptth/tor signaling leading to the production of ecdysone, a hormone required for the initiation of metamorphosis. This chain is Mitogen-activated protein kinase ERK-A, found in Drosophila melanogaster (Fruit fly).